The following is a 371-amino-acid chain: Sensor histidine kinase YvfT (371 aa).

At methionine 1 to lysine 10 the chain is on the extracellular side. Residues glutamate 11 to leucine 31 form a helical membrane-spanning segment. Over lysine 32–glutamine 38 the chain is Cytoplasmic. A helical transmembrane segment spans residues glycine 39–valine 59. Residues glycine 60–glutamine 71 are Extracellular-facing. A helical transmembrane segment spans residues methionine 72–phenylalanine 92. Residues proline 93–alanine 109 are Cytoplasmic-facing. Residues phenylalanine 110 to valine 130 traverse the membrane as a helical segment. The Extracellular segment spans residues serine 131–leucine 135. A helical membrane pass occupies residues phenylalanine 136–phenylalanine 156. Topologically, residues arginine 157–glutamate 371 are cytoplasmic. Positions aspartate 187–lysine 368 constitute a Histidine kinase domain. Histidine 189 carries the post-translational modification Phosphohistidine; by autocatalysis.

The protein resides in the cell membrane. It catalyses the reaction ATP + protein L-histidine = ADP + protein N-phospho-L-histidine.. Functionally, member of the two-component regulatory system YvfT/YvfU. Probably activates YvfU by phosphorylation. The polypeptide is Sensor histidine kinase YvfT (yvfT) (Bacillus subtilis (strain 168)).